Consider the following 89-residue polypeptide: Small ribosomal subunit protein uS15 (89 aa).

It belongs to the universal ribosomal protein uS15 family. Part of the 30S ribosomal subunit. Forms a bridge to the 50S subunit in the 70S ribosome, contacting the 23S rRNA.

One of the primary rRNA binding proteins, it binds directly to 16S rRNA where it helps nucleate assembly of the platform of the 30S subunit by binding and bridging several RNA helices of the 16S rRNA. Functionally, forms an intersubunit bridge (bridge B4) with the 23S rRNA of the 50S subunit in the ribosome. This Bacillus licheniformis (strain ATCC 14580 / DSM 13 / JCM 2505 / CCUG 7422 / NBRC 12200 / NCIMB 9375 / NCTC 10341 / NRRL NRS-1264 / Gibson 46) protein is Small ribosomal subunit protein uS15.